A 264-amino-acid chain; its full sequence is Rhamnosyltransferase WbbL (264 aa).

Belongs to the glycosyltransferase 2 family.

Its pathway is bacterial outer membrane biogenesis; lipopolysaccharide biosynthesis. In terms of biological role, rhamnosyltransferase involved in lipopolysaccharide biosynthesis. This is Rhamnosyltransferase WbbL (wbbL) from Escherichia coli (strain K12).